Here is a 288-residue protein sequence, read N- to C-terminus: Elongation factor Ts (288 aa).

Residues 82 to 85 (TDFV) are involved in Mg(2+) ion dislocation from EF-Tu.

This sequence belongs to the EF-Ts family.

It localises to the cytoplasm. Associates with the EF-Tu.GDP complex and induces the exchange of GDP to GTP. It remains bound to the aminoacyl-tRNA.EF-Tu.GTP complex up to the GTP hydrolysis stage on the ribosome. The chain is Elongation factor Ts from Chlorobium limicola (strain DSM 245 / NBRC 103803 / 6330).